Consider the following 195-residue polypeptide: Thymidylate kinase (195 aa).

7–14 (GIDGVGKS) contributes to the ATP binding site.

Belongs to the thymidylate kinase family.

The enzyme catalyses dTMP + ATP = dTDP + ADP. Phosphorylation of dTMP to form dTDP in both de novo and salvage pathways of dTTP synthesis. The sequence is that of Thymidylate kinase from Campylobacter concisus (strain 13826).